The sequence spans 366 residues: tRNA/tmRNA (uracil-C(5))-methyltransferase (366 aa).

S-adenosyl-L-methionine-binding residues include Gln-190, Tyr-218, Asn-223, Glu-239, and Asp-299. The active-site Nucleophile is Cys-324. Glu-358 (proton acceptor) is an active-site residue.

It belongs to the class I-like SAM-binding methyltransferase superfamily. RNA M5U methyltransferase family. TrmA subfamily.

The enzyme catalyses uridine(54) in tRNA + S-adenosyl-L-methionine = 5-methyluridine(54) in tRNA + S-adenosyl-L-homocysteine + H(+). It carries out the reaction uridine(341) in tmRNA + S-adenosyl-L-methionine = 5-methyluridine(341) in tmRNA + S-adenosyl-L-homocysteine + H(+). Its function is as follows. Dual-specificity methyltransferase that catalyzes the formation of 5-methyluridine at position 54 (m5U54) in all tRNAs, and that of position 341 (m5U341) in tmRNA (transfer-mRNA). This chain is tRNA/tmRNA (uracil-C(5))-methyltransferase, found in Escherichia coli O81 (strain ED1a).